The primary structure comprises 363 residues: Probable transglycosylase BTH_I0986 (363 aa).

It belongs to the glycosyltransferase group 1 family. Glycosyltransferase 4 subfamily.

Its function is as follows. Probably a transglycosylase. Probably involved in synthesis of the outer membrane receptor for a cellular contact-dependent growth inhibition (CDI) system. The polypeptide is Probable transglycosylase BTH_I0986 (Burkholderia thailandensis (strain ATCC 700388 / DSM 13276 / CCUG 48851 / CIP 106301 / E264)).